Reading from the N-terminus, the 382-residue chain is Galactokinase (382 aa).

A substrate-binding site is contributed by Glu-34–Asp-37. Residue Gly-124–Ser-130 participates in ATP binding. Mg(2+)-binding residues include Ser-130 and Glu-162. The active-site Proton acceptor is the Asp-174. Tyr-223 serves as a coordination point for substrate.

The protein belongs to the GHMP kinase family. GalK subfamily.

The protein localises to the cytoplasm. The catalysed reaction is alpha-D-galactose + ATP = alpha-D-galactose 1-phosphate + ADP + H(+). It functions in the pathway carbohydrate metabolism; galactose metabolism. Catalyzes the transfer of the gamma-phosphate of ATP to D-galactose to form alpha-D-galactose-1-phosphate (Gal-1-P). This chain is Galactokinase, found in Salmonella choleraesuis (strain SC-B67).